Here is a 342-residue protein sequence, read N- to C-terminus: Ion-translocating oxidoreductase complex subunit D (342 aa).

3 helical membrane-spanning segments follow: residues glycine 42 to leucine 62, asparagine 68 to proline 90, and alanine 124 to alanine 144. At threonine 171 the chain carries FMN phosphoryl threonine. The next 5 helical transmembrane spans lie at phenylalanine 200–isoleucine 220, tryptophan 227–isoleucine 247, phenylalanine 252–alanine 272, leucine 286–proline 306, and alanine 308–glutamine 328.

The protein belongs to the NqrB/RnfD family. As to quaternary structure, the complex is composed of six subunits: RnfA, RnfB, RnfC, RnfD, RnfE and RnfG. The cofactor is FMN.

It localises to the cell inner membrane. Part of a membrane-bound complex that couples electron transfer with translocation of ions across the membrane. The chain is Ion-translocating oxidoreductase complex subunit D from Alcanivorax borkumensis (strain ATCC 700651 / DSM 11573 / NCIMB 13689 / SK2).